The sequence spans 650 residues: Threonine--tRNA ligase (650 aa).

Residues 3-65 (DLVKVTLPDG…DRDARLEIVT (63 aa)) enclose the TGS domain. Positions 248-548 (DHRRLGPQLG…LTEHYAGAFP (301 aa)) are catalytic. Zn(2+) is bound by residues Cys-349, His-400, and His-525.

The protein belongs to the class-II aminoacyl-tRNA synthetase family. As to quaternary structure, homodimer. It depends on Zn(2+) as a cofactor.

The protein localises to the cytoplasm. It carries out the reaction tRNA(Thr) + L-threonine + ATP = L-threonyl-tRNA(Thr) + AMP + diphosphate + H(+). Catalyzes the attachment of threonine to tRNA(Thr) in a two-step reaction: L-threonine is first activated by ATP to form Thr-AMP and then transferred to the acceptor end of tRNA(Thr). Also edits incorrectly charged L-seryl-tRNA(Thr). The sequence is that of Threonine--tRNA ligase from Anaeromyxobacter dehalogenans (strain 2CP-C).